Consider the following 146-residue polypeptide: Large ribosomal subunit protein mL49 (146 aa).

The N-terminal 38 residues, 1–38 (MISSCVTRCFGRGKCLPGPATASIYQTIRCISTNSNKA), are a transit peptide targeting the mitochondrion.

The protein belongs to the mitochondrion-specific ribosomal protein mL49 family. As to quaternary structure, component of the mitochondrial large ribosomal subunit (mt-LSU). Mature yeast 74S mitochondrial ribosomes consist of a small (37S) and a large (54S) subunit. The 37S small subunit contains a 15S ribosomal RNA (15S mt-rRNA) and 34 different proteins. The 54S large subunit contains a 21S rRNA (21S mt-rRNA) and 46 different proteins.

The protein resides in the mitochondrion. In terms of biological role, component of the mitochondrial ribosome (mitoribosome), a dedicated translation machinery responsible for the synthesis of mitochondrial genome-encoded proteins, including at least some of the essential transmembrane subunits of the mitochondrial respiratory chain. The mitoribosomes are attached to the mitochondrial inner membrane and translation products are cotranslationally integrated into the membrane. The sequence is that of Large ribosomal subunit protein mL49 (IMG2) from Saccharomyces cerevisiae (strain ATCC 204508 / S288c) (Baker's yeast).